A 382-amino-acid polypeptide reads, in one-letter code: S-adenosylmethionine synthase (382 aa).

Residue glutamate 10 participates in Mg(2+) binding. Position 16 (histidine 16) interacts with ATP. Glutamate 44 is a binding site for K(+). L-methionine is bound by residues glutamate 57 and glutamine 100. Residues 166 to 168 (DTK), 234 to 237 (SGRF), aspartate 245, 251 to 252 (RK), alanine 268, lysine 272, and lysine 276 contribute to the ATP site. Residue aspartate 245 coordinates L-methionine. Lysine 276 provides a ligand contact to L-methionine.

The protein belongs to the AdoMet synthase family. It depends on Mg(2+) as a cofactor. Requires K(+) as cofactor.

It catalyses the reaction L-methionine + ATP + H2O = S-adenosyl-L-methionine + phosphate + diphosphate. It participates in amino-acid biosynthesis; S-adenosyl-L-methionine biosynthesis; S-adenosyl-L-methionine from L-methionine: step 1/1. Catalyzes the formation of S-adenosylmethionine from methionine and ATP. The reaction comprises two steps that are both catalyzed by the same enzyme: formation of S-adenosylmethionine (AdoMet) and triphosphate, and subsequent hydrolysis of the triphosphate. The chain is S-adenosylmethionine synthase (sam1) from Schizosaccharomyces pombe (strain 972 / ATCC 24843) (Fission yeast).